A 249-amino-acid polypeptide reads, in one-letter code: 1-(5-phosphoribosyl)-5-[(5-phosphoribosylamino)methylideneamino] imidazole-4-carboxamide isomerase (249 aa).

The Proton acceptor role is filled by Asp8. Asp131 functions as the Proton donor in the catalytic mechanism.

The protein belongs to the HisA/HisF family.

The protein resides in the cytoplasm. The catalysed reaction is 1-(5-phospho-beta-D-ribosyl)-5-[(5-phospho-beta-D-ribosylamino)methylideneamino]imidazole-4-carboxamide = 5-[(5-phospho-1-deoxy-D-ribulos-1-ylimino)methylamino]-1-(5-phospho-beta-D-ribosyl)imidazole-4-carboxamide. It participates in amino-acid biosynthesis; L-histidine biosynthesis; L-histidine from 5-phospho-alpha-D-ribose 1-diphosphate: step 4/9. The chain is 1-(5-phosphoribosyl)-5-[(5-phosphoribosylamino)methylideneamino] imidazole-4-carboxamide isomerase from Aromatoleum aromaticum (strain DSM 19018 / LMG 30748 / EbN1) (Azoarcus sp. (strain EbN1)).